Consider the following 370-residue polypeptide: Metallophosphoesterase 1 homolog (370 aa).

A helical transmembrane segment spans residues 7–27; the sequence is CFVIVLCALIFCEYVADFVVL. Residues Asp52, Asp94, Asn132, His225, His275, and His277 each contribute to the a divalent metal cation site. A helical transmembrane segment spans residues 328–348; sequence FVFNSYLSAGILCLIVIGFQL.

This sequence belongs to the metallophosphoesterase superfamily. MPPE1 family. Mn(2+) serves as cofactor.

The protein resides in the membrane. In terms of biological role, metallophosphoesterase. The chain is Metallophosphoesterase 1 homolog (PGAP5) from Drosophila melanogaster (Fruit fly).